The sequence spans 252 residues: Phosphate import ATP-binding protein PstB (252 aa).

The region spanning 5 to 247 (LIASDVNIFY…PRDERTEAYV (243 aa)) is the ABC transporter domain. Residue 37–44 (GPSGCGKT) participates in ATP binding.

This sequence belongs to the ABC transporter superfamily. Phosphate importer (TC 3.A.1.7) family. The complex is composed of two ATP-binding proteins (PstB), two transmembrane proteins (PstC and PstA) and a solute-binding protein (PstS).

The protein resides in the cell membrane. The catalysed reaction is phosphate(out) + ATP + H2O = ADP + 2 phosphate(in) + H(+). In terms of biological role, part of the ABC transporter complex PstSACB involved in phosphate import. Responsible for energy coupling to the transport system. This is Phosphate import ATP-binding protein PstB from Deinococcus geothermalis (strain DSM 11300 / CIP 105573 / AG-3a).